The primary structure comprises 133 residues: Small ribosomal subunit protein uS8 (133 aa).

Belongs to the universal ribosomal protein uS8 family. In terms of assembly, part of the 30S ribosomal subunit. Contacts proteins S5 and S12.

One of the primary rRNA binding proteins, it binds directly to 16S rRNA central domain where it helps coordinate assembly of the platform of the 30S subunit. In Orientia tsutsugamushi (strain Boryong) (Rickettsia tsutsugamushi), this protein is Small ribosomal subunit protein uS8.